The primary structure comprises 220 residues: ATP synthase subunit beta, chloroplastic (220 aa).

This sequence belongs to the ATPase alpha/beta chains family. In terms of assembly, F-type ATPases have 2 components, CF(1) - the catalytic core - and CF(0) - the membrane proton channel. CF(1) has five subunits: alpha(3), beta(3), gamma(1), delta(1), epsilon(1). CF(0) has four main subunits: a(1), b(1), b'(1) and c(9-12).

It localises to the plastid. The protein resides in the chloroplast thylakoid membrane. The enzyme catalyses ATP + H2O + 4 H(+)(in) = ADP + phosphate + 5 H(+)(out). Functionally, produces ATP from ADP in the presence of a proton gradient across the membrane. The catalytic sites are hosted primarily by the beta subunits. This Osmundastrum cinnamomeum (Cinnamon fern) protein is ATP synthase subunit beta, chloroplastic (atpB).